Here is a 245-residue protein sequence, read N- to C-terminus: Thymidylate kinase (245 aa).

55-62 provides a ligand contact to ATP; it reads GIDGVGKS.

It belongs to the thymidylate kinase family.

It carries out the reaction dTMP + ATP = dTDP + ADP. Functionally, phosphorylation of dTMP to form dTDP in both de novo and salvage pathways of dTTP synthesis. The polypeptide is Thymidylate kinase (Rhodopirellula baltica (strain DSM 10527 / NCIMB 13988 / SH1)).